A 118-amino-acid polypeptide reads, in one-letter code: Holo-[acyl-carrier-protein] synthase (118 aa).

Residues Asp-8 and Glu-58 each contribute to the Mg(2+) site.

The protein belongs to the P-Pant transferase superfamily. AcpS family. Mg(2+) serves as cofactor.

Its subcellular location is the cytoplasm. It catalyses the reaction apo-[ACP] + CoA = holo-[ACP] + adenosine 3',5'-bisphosphate + H(+). Transfers the 4'-phosphopantetheine moiety from coenzyme A to a Ser of acyl-carrier-protein. The polypeptide is Holo-[acyl-carrier-protein] synthase (Listeria monocytogenes serotype 4b (strain CLIP80459)).